The chain runs to 186 residues: Threonylcarbamoyl-AMP synthase (186 aa).

A YrdC-like domain is found at 2 to 186 (VSNLQQVVKA…ARTEQLLRQG (185 aa)).

This sequence belongs to the SUA5 family. TsaC subfamily.

It is found in the cytoplasm. The enzyme catalyses L-threonine + hydrogencarbonate + ATP = L-threonylcarbamoyladenylate + diphosphate + H2O. Functionally, required for the formation of a threonylcarbamoyl group on adenosine at position 37 (t(6)A37) in tRNAs that read codons beginning with adenine. Catalyzes the conversion of L-threonine, HCO(3)(-)/CO(2) and ATP to give threonylcarbamoyl-AMP (TC-AMP) as the acyladenylate intermediate, with the release of diphosphate. The sequence is that of Threonylcarbamoyl-AMP synthase from Vibrio vulnificus (strain CMCP6).